The chain runs to 386 residues: ATP synthase subunit a (386 aa).

Helical transmembrane passes span 150 to 170 (FTNEVLYMLLTVVLVVFLFFV), 243 to 263 (HFLITLALSFSIFIGITIVGF), 270 to 290 (FFSFLLPAGVPLPLAPFLVLL), and 310 to 330 (MMAGHSLVKILSGFAWTMLFL).

It belongs to the ATPase A chain family. As to quaternary structure, F-type ATPases have 2 components, CF(1) - the catalytic core - and CF(0) - the membrane proton channel. CF(1) has five subunits: alpha(3), beta(3), gamma(1), delta(1), epsilon(1). CF(0) has three main subunits: a, b and c.

It is found in the mitochondrion inner membrane. Functionally, mitochondrial membrane ATP synthase (F(1)F(0) ATP synthase or Complex V) produces ATP from ADP in the presence of a proton gradient across the membrane which is generated by electron transport complexes of the respiratory chain. F-type ATPases consist of two structural domains, F(1) - containing the extramembraneous catalytic core and F(0) - containing the membrane proton channel, linked together by a central stalk and a peripheral stalk. During catalysis, ATP synthesis in the catalytic domain of F(1) is coupled via a rotary mechanism of the central stalk subunits to proton translocation. Key component of the proton channel; it may play a direct role in the translocation of protons across the membrane. The sequence is that of ATP synthase subunit a (ATP6) from Triticum aestivum (Wheat).